A 503-amino-acid polypeptide reads, in one-letter code: MDFLTNLRFTEGISEPYIEIFEQPRQRGTRFRYKCEGRSAGSIPGEHSTDNNKTFPSIQILNYFGKVKIRTTLVTKNEPYKPHPHDLVGKGCRDGYYEAEFGPERQVLSFQNLGIQCVKKKDLKESISLRISKKINPFNVPEEQLHNIDEYDLNVVRLCFQAFLPDEHGNYTLALPPLISNPIYDNRAPNTAELRICRVNKNCGSVKGGDEIFLLCDKVQKDDIEVRFVLGNWEAKGSFSQADVHRQVAIVFRTPPFLGDITEPITVKMQLRRPSDQAVSEPVDFRYLPDEEDPSGNKAKRQRSTLAWQKPIQDCGSAVTERPKAAPIPTVNPEGKLKKEPNMFSPTLMLPGLGTLSSSQMYPACSQMPTQPAQLGPGKQDTLHSCWQQLYSPSPSASSLLSLHSHSSFTAEVPQPGAQGSSSLPAYNPLNWPDEKNSSFYRNFGNTHGMGAALVSAAGMQSVSSSSIVQGTHQASATTASIMTMPRTPGEVPFLRQQVGYRS.

The region spanning 16–305 (PYIEIFEQPR…GNKAKRQRST (290 aa)) is the RHD domain. Serine 275 carries the phosphoserine; by host PKA modification. 2 disordered regions span residues 286 to 306 (RYLPDEEDPSGNKAKRQRSTL) and 318 to 342 (AVTERPKAAPIPTVNPEGKLKKEPN). A Nuclear localization signal motif is present at residues 298-303 (KAKRQR).

It is found in the host cytoplasm. In terms of biological role, this transforming protein appears to have a protein-kinase activity. The protein is Transforming protein rel polyprotein (V-REL) of Galliformes.